We begin with the raw amino-acid sequence, 268 residues long: 4-hydroxy-tetrahydrodipicolinate reductase (268 aa).

NAD(+)-binding positions include 10–15 and Asp36; that span reads GASGRM. An NADP(+)-binding site is contributed by Arg37. NAD(+)-binding positions include 99-101 and 123-126; these read GTT and SANM. Residue His156 is the Proton donor/acceptor of the active site. His157 is a (S)-2,3,4,5-tetrahydrodipicolinate binding site. Residue Lys160 is the Proton donor of the active site. (S)-2,3,4,5-tetrahydrodipicolinate is bound at residue 166 to 167; that stretch reads GT.

The protein belongs to the DapB family.

It localises to the cytoplasm. The enzyme catalyses (S)-2,3,4,5-tetrahydrodipicolinate + NAD(+) + H2O = (2S,4S)-4-hydroxy-2,3,4,5-tetrahydrodipicolinate + NADH + H(+). The catalysed reaction is (S)-2,3,4,5-tetrahydrodipicolinate + NADP(+) + H2O = (2S,4S)-4-hydroxy-2,3,4,5-tetrahydrodipicolinate + NADPH + H(+). The protein operates within amino-acid biosynthesis; L-lysine biosynthesis via DAP pathway; (S)-tetrahydrodipicolinate from L-aspartate: step 4/4. Catalyzes the conversion of 4-hydroxy-tetrahydrodipicolinate (HTPA) to tetrahydrodipicolinate. This chain is 4-hydroxy-tetrahydrodipicolinate reductase, found in Burkholderia thailandensis (strain ATCC 700388 / DSM 13276 / CCUG 48851 / CIP 106301 / E264).